Reading from the N-terminus, the 368-residue chain is Flap endonuclease 1 (368 aa).

Residues 1–104 (MGIHDLSKVI…GELLKRGARR (104 aa)) are N-domain. Mg(2+) is bound at residue Asp34. Residues Arg47 and Arg70 each coordinate DNA. Asp86 lines the Mg(2+) pocket. The segment at 103–123 (RRKEAQANLEEATEQGDTEQM) is disordered. Residues 122 to 251 (QMEKFSRRLV…QKAYQLIKEH (130 aa)) are I-domain. Glu158, Glu160, Asp179, and Asp181 together coordinate Mg(2+). Glu158 is a DNA binding site. Positions 229 and 231 each coordinate DNA. Position 231 (Asp231) interacts with Mg(2+). Residues 334–342 (QQGRLDSFF) are interaction with PCNA.

This sequence belongs to the XPG/RAD2 endonuclease family. FEN1 subfamily. Interacts with PCNA. Three molecules of FEN1 bind to one PCNA trimer with each molecule binding to one PCNA monomer. PCNA stimulates the nuclease activity without altering cleavage specificity. Mg(2+) is required as a cofactor. In terms of processing, phosphorylated. Phosphorylation upon DNA damage induces relocalization to the nuclear plasma.

Its subcellular location is the nucleus. It localises to the nucleolus. It is found in the nucleoplasm. The protein resides in the mitochondrion. Its function is as follows. Structure-specific nuclease with 5'-flap endonuclease and 5'-3' exonuclease activities involved in DNA replication and repair. During DNA replication, cleaves the 5'-overhanging flap structure that is generated by displacement synthesis when DNA polymerase encounters the 5'-end of a downstream Okazaki fragment. It enters the flap from the 5'-end and then tracks to cleave the flap base, leaving a nick for ligation. Also involved in the long patch base excision repair (LP-BER) pathway, by cleaving within the apurinic/apyrimidinic (AP) site-terminated flap. Acts as a genome stabilization factor that prevents flaps from equilibrating into structures that lead to duplications and deletions. Also possesses 5'-3' exonuclease activity on nicked or gapped double-stranded DNA, and exhibits RNase H activity. Also involved in replication and repair of rDNA and in repairing mitochondrial DNA. This Monosiga brevicollis (Choanoflagellate) protein is Flap endonuclease 1.